The following is a 191-amino-acid chain: MNPEDADRILAAQAASGNQRAFGQLVARHGVALAQAARSFGIPETDVDDVVQDTFVAAWHALDDFDPDRPFRAWLFRIGLNKMRDLYRFRRVRQFLFGAENLGDLELAGGVANDEPGPEQQVAARLELARVASTLGKLDTGSREVIVLTAIVGMSQPEAAAVLGLSVKAVEGRIGRARAKLSALLDADSEK.

Residues 49–62 (DVVQDTFVAAWHAL) carry the Polymerase core binding motif. The H-T-H motif DNA-binding region spans 156-175 (QPEAAAVLGLSVKAVEGRIG).

Belongs to the sigma-70 factor family. ECF subfamily.

In terms of biological role, sigma factors are initiation factors that promote the attachment of RNA polymerase to specific initiation sites and are then released. This sigma factor regulates the genes for a membrane-located efflux system that confers resistance to nickel and cobalt. CnrH alone is able to activate CNR expression, while both CnrY and CrnX are needed for nickel induction of cnrH. Binds DNA in an RNA polymerase-dependent fashion. CnrH may be controlled by a CnrYX transmembrane anti-sigma factor complex which binds CnrH in the absence of Ni(2+). If Ni(2+) appears in the periplasm, it may be bound by CnrR (CnrX); the signal then would be transmitted by CnrY into the cytoplasm and CnrH would be released. The polypeptide is RNA polymerase sigma factor CnrH (cnrH) (Cupriavidus metallidurans (strain ATCC 43123 / DSM 2839 / NBRC 102507 / CH34) (Ralstonia metallidurans)).